A 129-amino-acid polypeptide reads, in one-letter code: Histone H2A-IV (129 aa).

A disordered region spans residues 1-22 (MSGRGKQGGKARAKAKSRSSRA). Ser2 carries the post-translational modification N-acetylserine. A Phosphoserine modification is found at Ser2. An N6-(2-hydroxyisobutyryl)lysine modification is found at Lys6. N6-acetyllysine is present on residues Lys6 and Lys10. A compositionally biased stretch (basic residues) spans 7-19 (QGGKARAKAKSRS). Lys10 is modified (N6-(2-hydroxyisobutyryl)lysine; alternate). At Lys10 the chain carries N6-lactoyllysine; alternate. N6-succinyllysine is present on Lys10. Residues Lys14 and Lys16 each participate in a glycyl lysine isopeptide (Lys-Gly) (interchain with G-Cter in ubiquitin) cross-link. Lys37 carries the N6-(2-hydroxyisobutyryl)lysine; alternate modification. N6-(2-hydroxyisobutyryl)lysine occurs at positions 75 and 76. Lys96 carries the N6-(2-hydroxyisobutyryl)lysine; alternate modification. N6-succinyllysine is present on Lys96. Lys96 carries the post-translational modification N6-glutaryllysine; alternate. At Lys100 the chain carries N6-glutaryllysine. The residue at position 105 (Gln105) is an N5-methylglutamine. An N6-(2-hydroxyisobutyryl)lysine; alternate modification is found at Lys119. Residues Lys119 and Lys120 each carry the N6-glutaryllysine; alternate modification. Lys120 is covalently cross-linked (Glycyl lysine isopeptide (Lys-Gly) (interchain with G-Cter in ubiquitin)).

The protein belongs to the histone H2A family. As to quaternary structure, the nucleosome is a histone octamer containing two molecules each of H2A, H2B, H3 and H4 assembled in one H3-H4 heterotetramer and two H2A-H2B heterodimers. The octamer wraps approximately 147 bp of DNA. In terms of processing, monoubiquitination of Lys-120 (H2AK119Ub) gives a specific tag for epigenetic transcriptional repression. Following DNA double-strand breaks (DSBs), it is ubiquitinated through 'Lys-63' linkage of ubiquitin moieties, leading to the recruitment of repair proteins to sites of DNA damage. H2AK119Ub and ionizing radiation-induced 'Lys-63'-linked ubiquitination are distinct events. Post-translationally, phosphorylation on Ser-2 is enhanced during mitosis. Phosphorylation on Ser-2 directly represses transcription. Glutamine methylation at Gln-105 (H2AQ104me) by FBL is specifically dedicated to polymerase I. It is present at 35S ribosomal DNA locus and impairs binding of the FACT complex.

It localises to the nucleus. The protein localises to the chromosome. Functionally, core component of nucleosome. Nucleosomes wrap and compact DNA into chromatin, limiting DNA accessibility to the cellular machineries which require DNA as a template. Histones thereby play a central role in transcription regulation, DNA repair, DNA replication and chromosomal stability. DNA accessibility is regulated via a complex set of post-translational modifications of histones, also called histone code, and nucleosome remodeling. This is Histone H2A-IV from Gallus gallus (Chicken).